The chain runs to 946 residues: Bifunctional glutamine synthetase adenylyltransferase/adenylyl-removing enzyme (946 aa).

An adenylyl removase region spans residues 1 to 441; that stretch reads MSLLNDAALH…EFNWVIGDDE (441 aa). The adenylyl transferase stretch occupies residues 448 to 946; sequence DQALSELWAL…VIKIWEKFLD (499 aa).

This sequence belongs to the GlnE family. Mg(2+) serves as cofactor.

The catalysed reaction is [glutamine synthetase]-O(4)-(5'-adenylyl)-L-tyrosine + phosphate = [glutamine synthetase]-L-tyrosine + ADP. It catalyses the reaction [glutamine synthetase]-L-tyrosine + ATP = [glutamine synthetase]-O(4)-(5'-adenylyl)-L-tyrosine + diphosphate. In terms of biological role, involved in the regulation of glutamine synthetase GlnA, a key enzyme in the process to assimilate ammonia. When cellular nitrogen levels are high, the C-terminal adenylyl transferase (AT) inactivates GlnA by covalent transfer of an adenylyl group from ATP to specific tyrosine residue of GlnA, thus reducing its activity. Conversely, when nitrogen levels are low, the N-terminal adenylyl removase (AR) activates GlnA by removing the adenylyl group by phosphorolysis, increasing its activity. The regulatory region of GlnE binds the signal transduction protein PII (GlnB) which indicates the nitrogen status of the cell. In Psychromonas ingrahamii (strain DSM 17664 / CCUG 51855 / 37), this protein is Bifunctional glutamine synthetase adenylyltransferase/adenylyl-removing enzyme.